The sequence spans 530 residues: Autoinducer-2 kinase (530 aa).

It belongs to the FGGY kinase family.

The protein resides in the cytoplasm. It carries out the reaction (S)-4,5-dihydroxypentane-2,3-dione + ATP = (2S)-2-hydroxy-3,4-dioxopentyl phosphate + ADP + H(+). Catalyzes the phosphorylation of autoinducer-2 (AI-2) to phospho-AI-2, which subsequently inactivates the transcriptional regulator LsrR and leads to the transcription of the lsr operon. Phosphorylates the ring-open form of (S)-4,5-dihydroxypentane-2,3-dione (DPD), which is the precursor to all AI-2 signaling molecules, at the C5 position. The polypeptide is Autoinducer-2 kinase (Salmonella typhimurium (strain LT2 / SGSC1412 / ATCC 700720)).